A 193-amino-acid polypeptide reads, in one-letter code: Transforming protein RhoA (193 aa).

Residues 12–19 and 30–37 contribute to the GTP site; these read GDGACGKT and FPEVYVPT. Positions 34 to 42 match the Effector region motif; the sequence is YVPTVFENY. N41 carries the post-translational modification (Microbial infection) ADP-ribosylasparagine; by botulinum toxin. GTP contacts are provided by residues 59–63 and 117–120; these read DTAGQ and NKKD. Residues 61–78 form a switch II region; involved in RAP1GDS1 isoform 2 binding region; it reads AGQEDYDRLRPLSYPDTD. Q63 carries the 5-glutamyl serotonin modification. A Glycyl lysine isopeptide (Lys-Gly) (interchain with G-Cter in ubiquitin) cross-link involves residue K135. Residue 160–162 coordinates GTP; the sequence is SAK. Phosphoserine; by PKG/PRKG1 is present on S188. C190 carries the post-translational modification Cysteine methyl ester. A lipid anchor (S-geranylgeranyl cysteine) is attached at C190. Positions 191 to 193 are cleaved as a propeptide — removed in mature form; sequence LVL.

It belongs to the small GTPase superfamily. Rho family. In terms of assembly, interacts with ARHGEF28. Interacts (via GTP-bound form) with RIPOR1 (via N-terminus); this interaction links RHOA to STK24 and STK26 kinases. Interacts with RIPOR2 (via active GTP- or inactive GDP-bound forms) isoform 1 and isoform 2; these interactions are direct, block the loading of GTP to RHOA and decrease upon chemokine CCL19 stimulation in primary T lymphocytes. Binds PRKCL1, ROCK1 and ROCK2. Interacts with ARHGEF2, ARHGEF3, NET1 and RTKN. Interacts with PLCE1 and AKAP13. Interacts with DIAPH1. Interacts (in the constitutively activated, GTP-bound form) with DGKQ. Interacts with RACK1; enhances RHOA activation. Interacts with PKP4; the interaction is detected at the midbody. Interacts (GTP-bound form preferentially) with PKN2; the interaction stimulates autophosphorylation and phosphorylation of PKN2. Interacts with ARHGDIA; this interaction inactivates and stabilizes RHOA. Interacts with ARHGDIB. Interacts (GTP-bound form) with KCNA2 (via cytoplasmic N-terminal domain). Interacts (GTP-bound form) with ECT2; the interaction results in allosteric activation of ECT2. Interacts with RAP1GDS1; the interaction is direct and in a 1:1 stoichiometry. Mg(2+) serves as cofactor. Post-translationally, phosphorylation by PRKG1 at Ser-188 inactivates RHOA signaling. Phosphorylation by SLK at Ser-188 in response to AGTR2 activation. Ubiquitinated by the BCR(KCTD13) and BCR(TNFAIP1) E3 ubiquitin ligase complexes, leading to its degradation by the proteasome, thereby regulating the actin cytoskeleton and synaptic transmission in neurons. Ubiquitinated at Lys-135 in a FBXL19-mediated manner; leading to proteasomal degradation. In terms of processing, serotonylation of Gln-63 by TGM2 during activation and aggregation of platelets leads to constitutive activation of GTPase activity.

Its subcellular location is the cell membrane. The protein resides in the cytoplasm. It is found in the cytoskeleton. It localises to the cleavage furrow. The protein localises to the cell cortex. Its subcellular location is the midbody. The protein resides in the cell projection. It is found in the lamellipodium. It localises to the dendrite. The protein localises to the nucleus. The catalysed reaction is GTP + H2O = GDP + phosphate + H(+). With respect to regulation, regulated by guanine nucleotide exchange factors (GEFs) which promote the exchange of bound GDP for free GTP, GTPase activating proteins (GAPs) which increase the GTP hydrolysis activity and GDP dissociation inhibitors which inhibit the dissociation of the nucleotide from the GTPase. Activated by GEFs such as ARHGEF2, ARHGEF3, ARHGEF28 and BCR. Inhibited by GAPs such as ARHGAP30. Inhibited by GDP dissociation inhibitors such as ARHGDIA. Functionally, small GTPase which cycles between an active GTP-bound and an inactive GDP-bound state. Mainly associated with cytoskeleton organization, in active state binds to a variety of effector proteins to regulate cellular responses such as cytoskeletal dynamics, cell migration and cell cycle. Regulates a signal transduction pathway linking plasma membrane receptors to the assembly of focal adhesions and actin stress fibers. Involved in a microtubule-dependent signal that is required for the myosin contractile ring formation during cell cycle cytokinesis. Plays an essential role in cleavage furrow formation. Required for the apical junction formation of keratinocyte cell-cell adhesion. Essential for the SPATA13-mediated regulation of cell migration and adhesion assembly and disassembly. The MEMO1-RHOA-DIAPH1 signaling pathway plays an important role in ERBB2-dependent stabilization of microtubules at the cell cortex. It controls the localization of APC and CLASP2 to the cell membrane, via the regulation of GSK3B activity. In turn, membrane-bound APC allows the localization of the MACF1 to the cell membrane, which is required for microtubule capture and stabilization. Regulates KCNA2 potassium channel activity by reducing its location at the cell surface in response to CHRM1 activation; promotes KCNA2 endocytosis. Acts as an allosteric activator of guanine nucleotide exchange factor ECT2 by binding in its activated GTP-bound form to the PH domain of ECT2 which stimulates the release of PH inhibition and promotes the binding of substrate RHOA to the ECT2 catalytic center. May be an activator of PLCE1. In neurons, involved in the inhibition of the initial spine growth. Upon activation by CaMKII, modulates dendritic spine structural plasticity by relaying CaMKII transient activation to synapse-specific, long-term signaling. Acts as a regulator of platelet alpha-granule release during activation and aggregation of platelets. When activated by DAAM1 may signal centrosome maturation and chromosomal segregation during cell division. May also be involved in contractile ring formation during cytokinesis. The sequence is that of Transforming protein RhoA (RHOA) from Bos taurus (Bovine).